The following is a 71-amino-acid chain: Translation initiation factor IF-1 (71 aa).

Residues 1–71 (MSKDDLIQFT…LTKGRVIHRH (71 aa)) form the S1-like domain.

It belongs to the IF-1 family. In terms of assembly, component of the 30S ribosomal translation pre-initiation complex which assembles on the 30S ribosome in the order IF-2 and IF-3, IF-1 and N-formylmethionyl-tRNA(fMet); mRNA recruitment can occur at any time during PIC assembly.

It is found in the cytoplasm. In terms of biological role, one of the essential components for the initiation of protein synthesis. Stabilizes the binding of IF-2 and IF-3 on the 30S subunit to which N-formylmethionyl-tRNA(fMet) subsequently binds. Helps modulate mRNA selection, yielding the 30S pre-initiation complex (PIC). Upon addition of the 50S ribosomal subunit IF-1, IF-2 and IF-3 are released leaving the mature 70S translation initiation complex. The chain is Translation initiation factor IF-1 from Rickettsia typhi (strain ATCC VR-144 / Wilmington).